Reading from the N-terminus, the 231-residue chain is Large ribosomal subunit protein uL1 (231 aa).

This sequence belongs to the universal ribosomal protein uL1 family. Part of the 50S ribosomal subunit.

Functionally, binds directly to 23S rRNA. The L1 stalk is quite mobile in the ribosome, and is involved in E site tRNA release. Protein L1 is also a translational repressor protein, it controls the translation of the L11 operon by binding to its mRNA. The protein is Large ribosomal subunit protein uL1 of Caldanaerobacter subterraneus subsp. tengcongensis (strain DSM 15242 / JCM 11007 / NBRC 100824 / MB4) (Thermoanaerobacter tengcongensis).